A 334-amino-acid chain; its full sequence is Malate dehydrogenase (334 aa).

16–22 (GAAGQIA) contacts NAD(+). Substrate-binding residues include Arg-97 and Arg-103. NAD(+)-binding positions include Asn-110, Gln-117, and 134–136 (VGN). Substrate-binding residues include Asn-136 and Arg-167. His-192 (proton acceptor) is an active-site residue.

This sequence belongs to the LDH/MDH superfamily. MDH type 2 family.

It catalyses the reaction (S)-malate + NAD(+) = oxaloacetate + NADH + H(+). Catalyzes the reversible oxidation of malate to oxaloacetate. The protein is Malate dehydrogenase of Nocardia farcinica (strain IFM 10152).